We begin with the raw amino-acid sequence, 147 residues long: Elongation factor Tu (147 aa).

Belongs to the GTP-binding elongation factor family. EF-Tu/EF-1A subfamily. As to quaternary structure, monomer.

The protein localises to the cytoplasm. This protein promotes the GTP-dependent binding of aminoacyl-tRNA to the A-site of ribosomes during protein biosynthesis. The sequence is that of Elongation factor Tu (tuf) from Fructilactobacillus sanfranciscensis (Lactobacillus sanfranciscensis).